The chain runs to 418 residues: Enolase 1 (418 aa).

Gln-162 lines the (2R)-2-phosphoglycerate pocket. The Proton donor role is filled by Glu-204. Mg(2+)-binding residues include Asp-241, Glu-285, and Asp-312. Lys-337, Arg-366, Ser-367, and Lys-388 together coordinate (2R)-2-phosphoglycerate. The active-site Proton acceptor is the Lys-337.

Belongs to the enolase family. Mg(2+) serves as cofactor.

The protein localises to the cytoplasm. It is found in the secreted. The protein resides in the cell surface. The enzyme catalyses (2R)-2-phosphoglycerate = phosphoenolpyruvate + H2O. It participates in carbohydrate degradation; glycolysis; pyruvate from D-glyceraldehyde 3-phosphate: step 4/5. Functionally, catalyzes the reversible conversion of 2-phosphoglycerate (2-PG) into phosphoenolpyruvate (PEP). It is essential for the degradation of carbohydrates via glycolysis. The sequence is that of Enolase 1 from Lactococcus lactis subsp. cremoris (strain SK11).